The following is a 226-amino-acid chain: V-type proton ATPase subunit E 1 (226 aa).

The residue at position 2 (A2) is an N-acetylalanine. Y56 carries the phosphotyrosine modification.

This sequence belongs to the V-ATPase E subunit family. V-ATPase is a heteromultimeric enzyme made up of two complexes: the ATP-hydrolytic V1 complex and the proton translocation V0 complex. The V1 complex consists of three catalytic AB heterodimers that form a heterohexamer, three peripheral stalks each consisting of EG heterodimers, one central rotor including subunits D and F, and the regulatory subunits C and H. The proton translocation complex V0 consists of the proton transport subunit a, a ring of proteolipid subunits c9c'', rotary subunit d, subunits e and f, and the accessory subunits ATP6AP1/Ac45 and ATP6AP2/PRR. Interacts with RABL2/RABL2A; binds preferentially to GTP-bound RABL2. Interacts with ALDOC. Interacts with RAB11B. In terms of tissue distribution, expressed in brain (at protein level).

Its subcellular location is the apical cell membrane. It is found in the cytoplasmic vesicle. It localises to the secretory vesicle. The protein localises to the synaptic vesicle membrane. The protein resides in the clathrin-coated vesicle membrane. Subunit of the V1 complex of vacuolar(H+)-ATPase (V-ATPase), a multisubunit enzyme composed of a peripheral complex (V1) that hydrolyzes ATP and a membrane integral complex (V0) that translocates protons. V-ATPase is responsible for acidifying and maintaining the pH of intracellular compartments and in some cell types, is targeted to the plasma membrane, where it is responsible for acidifying the extracellular environment. The polypeptide is V-type proton ATPase subunit E 1 (Atp6v1e1) (Rattus norvegicus (Rat)).